The primary structure comprises 413 residues: Tyrosine--tRNA ligase (413 aa).

Position 34 (tyrosine 34) interacts with L-tyrosine. Positions 39 to 48 match the 'HIGH' region motif; it reads PTSHSLTVGH. L-tyrosine-binding residues include tyrosine 164 and glutamine 168. Positions 225–229 match the 'KMSKS' region motif; the sequence is KFGKS. Lysine 228 contacts ATP. Positions 347–413 constitute an S4 RNA-binding domain; that stretch reads ILLVDALVQT…GKKNNALIVF (67 aa).

Belongs to the class-I aminoacyl-tRNA synthetase family. TyrS type 1 subfamily. In terms of assembly, homodimer.

Its subcellular location is the cytoplasm. It catalyses the reaction tRNA(Tyr) + L-tyrosine + ATP = L-tyrosyl-tRNA(Tyr) + AMP + diphosphate + H(+). In terms of biological role, catalyzes the attachment of tyrosine to tRNA(Tyr) in a two-step reaction: tyrosine is first activated by ATP to form Tyr-AMP and then transferred to the acceptor end of tRNA(Tyr). In Onion yellows phytoplasma (strain OY-M), this protein is Tyrosine--tRNA ligase.